The primary structure comprises 200 residues: Late protein I196L (200 aa).

2 tandem repeats follow at residues 28 to 48 (SNSL…PTTS) and 49 to 69 (SNSL…PTTS). Residues 70–91 (SNYLTSAISTNISDKEEDTPFS) form a 3; approximate repeat.

This sequence belongs to the asfivirus I196L family.

The polypeptide is Late protein I196L (African swine fever virus (isolate Tick/South Africa/Pretoriuskop Pr4/1996) (ASFV)).